We begin with the raw amino-acid sequence, 394 residues long: 1-deoxy-D-xylulose 5-phosphate reductoisomerase (394 aa).

Residues threonine 14, glycine 15, serine 16, isoleucine 17, glycine 40, and asparagine 128 each contribute to the NADPH site. Residue lysine 129 participates in 1-deoxy-D-xylulose 5-phosphate binding. Position 130 (glutamate 130) interacts with NADPH. Aspartate 154 is a binding site for Mn(2+). Residues serine 155, glutamate 156, serine 180, and histidine 203 each coordinate 1-deoxy-D-xylulose 5-phosphate. A Mn(2+)-binding site is contributed by glutamate 156. Residue glycine 209 coordinates NADPH. Serine 216, asparagine 221, lysine 222, and glutamate 225 together coordinate 1-deoxy-D-xylulose 5-phosphate. Residue glutamate 225 coordinates Mn(2+).

This sequence belongs to the DXR family. Mg(2+) is required as a cofactor. The cofactor is Mn(2+).

It carries out the reaction 2-C-methyl-D-erythritol 4-phosphate + NADP(+) = 1-deoxy-D-xylulose 5-phosphate + NADPH + H(+). The protein operates within isoprenoid biosynthesis; isopentenyl diphosphate biosynthesis via DXP pathway; isopentenyl diphosphate from 1-deoxy-D-xylulose 5-phosphate: step 1/6. Functionally, catalyzes the NADPH-dependent rearrangement and reduction of 1-deoxy-D-xylulose-5-phosphate (DXP) to 2-C-methyl-D-erythritol 4-phosphate (MEP). This Xylella fastidiosa (strain M12) protein is 1-deoxy-D-xylulose 5-phosphate reductoisomerase.